A 349-amino-acid polypeptide reads, in one-letter code: N-acetyltaurine hydrolase (349 aa).

His26, His28, Glu169, His201, His230, and Asp298 together coordinate a divalent metal cation.

This sequence belongs to the metallo-dependent hydrolases superfamily. Phosphotriesterase family. A divalent metal cation is required as a cofactor. In terms of tissue distribution, expressed primarily in proximal tubules of the kidney.

It is found in the cytoplasm. The protein localises to the cytosol. The enzyme catalyses N-acetyltaurine + H2O = taurine + acetate. It catalyses the reaction N-propanoyltaurine + H2O = propanoate + taurine. It carries out the reaction N-acetyl-L-methionine + H2O = L-methionine + acetate. The catalysed reaction is N-acetyl-L-isoleucine + H2O = L-isoleucine + acetate. The enzyme catalyses N-acetyl-L-leucine + H2O = L-leucine + acetate. It catalyses the reaction N-acetyl-L-valine + H2O = L-valine + acetate. Functionally, N-acetyltaurine hydrolase that regulates feeding by catalyzing the hydrolysis of N-acetyltaurine into taurine and acetate. N-acetyltaurine has anorexigenic and anti-obesity effects that are dependent on GFRAL receptor and GDF15. PTER also acts on other N-acetyl amino acids (Met, Ile, Leu, Val) and N-propionyltaurine, but at lower rates. Binds resiniferotoxin, a vanilloid that desensitizes nociceptive neurons. This is N-acetyltaurine hydrolase from Rattus norvegicus (Rat).